Consider the following 85-residue polypeptide: Conotoxin MaIr94 (85 aa).

Residues 1–22 (MKLTCVLIITVLFLTACQLTAA) form the signal peptide. Residues 23–49 (GNSRDKQEDPVVRSSGEVQRSEDIKLA) constitute a propeptide that is removed on maturation. 3 disulfides stabilise this stretch: cysteine 52/cysteine 69, cysteine 59/cysteine 73, and cysteine 68/cysteine 84.

It belongs to the conotoxin O1 superfamily. As to expression, expressed by the venom duct.

The protein resides in the secreted. Functionally, produces no obvious effect on ionic currents when tested on the mouse dorsal rooted ganglia (DRG). In Conus marmoreus (Marble cone), this protein is Conotoxin MaIr94.